Here is a 243-residue protein sequence, read N- to C-terminus: Small ribosomal subunit protein uS5 (243 aa).

Residues 1 to 10 (MSDNETKETQ) are compositionally biased toward basic and acidic residues. Residues 1–50 (MSDNETKETQVAEETQNTVATESNNEDRKGRRGQRGEGRRGERRNRREEN) form a disordered region. Residues 12 to 23 (AEETQNTVATES) are compositionally biased toward polar residues. Residues 25-50 (NEDRKGRRGQRGEGRRGERRNRREEN) show a composition bias toward basic and acidic residues. In terms of domain architecture, S5 DRBM spans 55–118 (LLDRVVTINR…LDAKKHMFSV (64 aa)).

The protein belongs to the universal ribosomal protein uS5 family. Part of the 30S ribosomal subunit. Contacts proteins S4 and S8.

Functionally, with S4 and S12 plays an important role in translational accuracy. In terms of biological role, located at the back of the 30S subunit body where it stabilizes the conformation of the head with respect to the body. The chain is Small ribosomal subunit protein uS5 from Bifidobacterium longum (strain DJO10A).